The primary structure comprises 346 residues: Ribonucleoside-diphosphate reductase subunit beta (346 aa).

Residues E89, E120, and H123 each contribute to the Fe cation site. The active site involves Y129. Residues E193, E227, and H230 each contribute to the Fe cation site.

Belongs to the ribonucleoside diphosphate reductase small chain family. As to quaternary structure, tetramer of two alpha and two beta subunits. Fe cation serves as cofactor.

The enzyme catalyses a 2'-deoxyribonucleoside 5'-diphosphate + [thioredoxin]-disulfide + H2O = a ribonucleoside 5'-diphosphate + [thioredoxin]-dithiol. Functionally, provides the precursors necessary for DNA synthesis. Catalyzes the biosynthesis of deoxyribonucleotides from the corresponding ribonucleotides. The sequence is that of Ribonucleoside-diphosphate reductase subunit beta (nrdB) from Chlamydia trachomatis serovar D (strain ATCC VR-885 / DSM 19411 / UW-3/Cx).